A 201-amino-acid chain; its full sequence is uncharacterized protein (201 aa).

The protein belongs to the phosphatidylethanolamine-binding protein family.

This is an uncharacterized protein from Saccharomyces cerevisiae (strain ATCC 204508 / S288c) (Baker's yeast).